Reading from the N-terminus, the 184-residue chain is MKNLTDSFVYLGHWPSAGSFGFNTDILATNPINLSVVFGVLIFFGKGVLNDLLDNRKQRILNTIRNSEELREGAIQQLENARARLRKVETEADQFRVNGYSEIEREKLNLINSTYKTLKQLENYKNETILFEQQRTINQVRERVFQQALQGAIGTLNSCLSNELHLRTINANIGMFGTMKEITD.

A helical membrane pass occupies residues 27–49; sequence LATNPINLSVVFGVLIFFGKGVL.

Belongs to the ATPase B chain family. As to quaternary structure, F-type ATPases have 2 components, F(1) - the catalytic core - and F(0) - the membrane proton channel. F(1) has five subunits: alpha(3), beta(3), gamma(1), delta(1), epsilon(1). F(0) has four main subunits: a(1), b(1), b'(1) and c(10-14). The alpha and beta chains form an alternating ring which encloses part of the gamma chain. F(1) is attached to F(0) by a central stalk formed by the gamma and epsilon chains, while a peripheral stalk is formed by the delta, b and b' chains.

Its subcellular location is the plastid. It is found in the chloroplast thylakoid membrane. Its function is as follows. F(1)F(0) ATP synthase produces ATP from ADP in the presence of a proton or sodium gradient. F-type ATPases consist of two structural domains, F(1) containing the extramembraneous catalytic core and F(0) containing the membrane proton channel, linked together by a central stalk and a peripheral stalk. During catalysis, ATP synthesis in the catalytic domain of F(1) is coupled via a rotary mechanism of the central stalk subunits to proton translocation. Component of the F(0) channel, it forms part of the peripheral stalk, linking F(1) to F(0). In Nasturtium officinale (Watercress), this protein is ATP synthase subunit b, chloroplastic.